The chain runs to 164 residues: MTEFTHINQQGHAKMVDVSDKQITKRTAVAHSSITVNETIYKQISNNTNTKGNVLNTAQIAGIMAAKNTSTIIPMCHPLPLTGIDVHFNWDETNAPLYTLNIQTTVSTTGKTGVEMEALTAASATALTIYDMTKAVDKGMIIGETYLESKSGGKSGDFQRQLDQ.

Residues 75–77 (MCH) and 116–117 (ME) each bind substrate. Residue aspartate 131 is part of the active site.

The protein belongs to the MoaC family. Homohexamer; trimer of dimers.

It carries out the reaction (8S)-3',8-cyclo-7,8-dihydroguanosine 5'-triphosphate = cyclic pyranopterin phosphate + diphosphate. It functions in the pathway cofactor biosynthesis; molybdopterin biosynthesis. In terms of biological role, catalyzes the conversion of (8S)-3',8-cyclo-7,8-dihydroguanosine 5'-triphosphate to cyclic pyranopterin monophosphate (cPMP). This chain is Cyclic pyranopterin monophosphate synthase, found in Staphylococcus aureus (strain MRSA252).